Consider the following 342-residue polypeptide: MASATRAVFGELPSGGGTVEKFQLQSDLLRVDIISWGCTITALEVKDRQGRSSDVVLGFAELEGYLQKQPYFGAVIGRVANRIAKGTFKVDGKEYHLAINKEPNSLHGGVRGFDKVLWTPRVLSNGIQFSRISPDGEEGYPGELKVWVTYTLDGGELVVNYRAQASQATPVNLTNHSYFNLAGQGSPNIYDHEVTIEADTYLPVDETLIPTGEVAPVQGTAFDLRKPVELGKHLQDFHLNGFDHNFCLKGSKEKHFCARVHHAASGRVLEVYTTQPGVQFYMGNFLDGTLKGKNGAVYPKHSGFCLETQNWPDAVNQPRFPPVLLRPGEEYDHTTWFKFSVA.

At Ala2 the chain carries N-acetylalanine. At Ser14 the chain carries Phosphoserine. Residues Asn81–Arg82 and His107 contribute to the beta-D-galactose site. Position 124 is a phosphoserine (Ser124). The active-site Proton donor is His176. Beta-D-galactose contacts are provided by residues His176 to Tyr178, Asp243, Gln279, and Glu307. The active-site Proton acceptor is the Glu307.

This sequence belongs to the aldose epimerase family. Monomer.

It localises to the cytoplasm. It carries out the reaction alpha-D-galactose = beta-D-galactose. The catalysed reaction is alpha-D-glucose = beta-D-glucose. It functions in the pathway carbohydrate metabolism; hexose metabolism. The protein operates within carbohydrate metabolism; galactose metabolism. Its function is as follows. Mutarotase that catalyzes the interconversion of beta-D-galactose and alpha-D-galactose during galactose metabolism. Beta-D-galactose is metabolized in the liver into glucose 1-phosphate, the primary metabolic fuel, by the action of four enzymes that constitute the Leloir pathway: GALM, GALK1 (galactokinase), GALT (galactose-1-phosphate uridylyltransferase) and GALE (UDP-galactose-4'-epimerase). Involved in the maintenance of the equilibrium between the beta- and alpha-anomers of galactose, therefore ensuring a sufficient supply of the alpha-anomer for GALK1. Also active on D-glucose although shows a preference for galactose over glucose. In Pongo abelii (Sumatran orangutan), this protein is Galactose mutarotase (GALM).